Here is a 648-residue protein sequence, read N- to C-terminus: Transmembrane 9 superfamily member 8 (648 aa).

A signal peptide spans 1-33; that stretch reads MAMEFLRSSRRILESSGCAIALIFLLFIHGAHS. The Lumenal segment spans residues 34-285; it reads FYLPGVAPQD…YLLMSDNQIH (252 aa). A helical membrane pass occupies residues 286–306; sequence WFSIVNSLMIVLFLSGMVAMI. Over 307–355 the chain is Cytoplasmic; the sequence is MLRTLYRDISRYNELETQEEAQEETGWKLVHGDVFRLPTNSDLLCVYVG. A helical transmembrane segment spans residues 356–376; the sequence is TGVQCLGMVFVTMIFAMLGFL. The Lumenal portion of the chain corresponds to 377–381; that stretch reads SPSNR. A helical transmembrane segment spans residues 382-402; that stretch reads GGLMTAMLLLWVFMGLFAGYA. Residues 403–422 lie on the Cytoplasmic side of the membrane; it reads SSRLYKMFKGTEWKRIAFRT. A helical transmembrane segment spans residues 423–443; sequence AFLFPAVVSAIFFVLNALIWG. Over 444–455 the chain is Lumenal; sequence QKSSGAVPFGTM. Residues 456 to 476 traverse the membrane as a helical segment; the sequence is FALIFLWFGISVPLVFVGGYI. Residues 477-506 lie on the Cytoplasmic side of the membrane; that stretch reads GFKKPAADDPVKTNKIPRQIPEQAWYMNPV. Residues 507–527 form a helical membrane-spanning segment; the sequence is FSILIGGILPFGAVFIELFFI. Residues 528–538 are Lumenal-facing; sequence LTSIWLNQFYY. A helical transmembrane segment spans residues 539 to 559; it reads IFGFLFLVFVILIVTCAEITV. Topologically, residues 560–577 are cytoplasmic; it reads VLCYFQLCSEDYLWWWRS. A helical membrane pass occupies residues 578-598; it reads YLTSGSSALYLFLYATFYFFT. Over 599 to 604 the chain is Lumenal; that stretch reads KLQITK. Residues 605–625 form a helical membrane-spanning segment; sequence LVSAMLYFGYMLIASYAFFVL. The Cytoplasmic segment spans residues 626–648; that stretch reads TGTIGFYACLWFTRLIYSSVKID. An Endoplasmic reticulum export signal motif is present at residues 637–642; that stretch reads FTRLIY. Positions 646 to 648 match the Golgi retention signal motif; that stretch reads KID.

This sequence belongs to the nonaspanin (TM9SF) (TC 9.A.2) family.

Its subcellular location is the endosome membrane. The protein localises to the golgi apparatus membrane. This chain is Transmembrane 9 superfamily member 8, found in Arabidopsis thaliana (Mouse-ear cress).